Here is a 161-residue protein sequence, read N- to C-terminus: Peroxynitrite isomerase 2 (161 aa).

The GXWXGXG motif lies at 17–23 (GTWAGQG). His152 is a binding site for heme b.

It belongs to the nitrobindin family. Homodimer. Heme b is required as a cofactor.

The catalysed reaction is peroxynitrite = nitrate. Its pathway is nitrogen metabolism. Heme-binding protein able to scavenge peroxynitrite and to protect free L-tyrosine against peroxynitrite-mediated nitration, by acting as a peroxynitrite isomerase that converts peroxynitrite to nitrate. Therefore, this protein likely plays a role in peroxynitrite sensing and in the detoxification of reactive nitrogen and oxygen species (RNS and ROS, respectively). Is able to bind nitric oxide (NO) in vitro, but may act as a sensor of peroxynitrite levels in vivo. This Mycobacterium ulcerans (strain Agy99) protein is Peroxynitrite isomerase 2.